The chain runs to 943 residues: UvrABC system protein A (943 aa).

32 to 39 (GLSGSGKS) contributes to the ATP binding site. The C4-type zinc-finger motif lies at 251 to 278 (CPVCGFTVPELEPRLFSFNAPFGSCPTC). ABC transporter domains lie at 308-589 (WNPI…KKSI) and 609-937 (GSGR…QYLK). 641–648 (GVSGSGKS) provides a ligand contact to ATP. The C4-type zinc-finger motif lies at 740–766 (CEACSGDGIIKIEMHFLPDVYVPCEVC).

The protein belongs to the ABC transporter superfamily. UvrA family. In terms of assembly, forms a heterotetramer with UvrB during the search for lesions.

The protein localises to the cytoplasm. The UvrABC repair system catalyzes the recognition and processing of DNA lesions. UvrA is an ATPase and a DNA-binding protein. A damage recognition complex composed of 2 UvrA and 2 UvrB subunits scans DNA for abnormalities. When the presence of a lesion has been verified by UvrB, the UvrA molecules dissociate. In Streptococcus mutans serotype c (strain ATCC 700610 / UA159), this protein is UvrABC system protein A.